The chain runs to 56 residues: Large ribosomal subunit protein eL40 (56 aa).

Belongs to the eukaryotic ribosomal protein eL40 family.

This is Large ribosomal subunit protein eL40 from Saccharolobus islandicus (strain Y.N.15.51 / Yellowstone #2) (Sulfolobus islandicus).